The following is an 86-amino-acid chain: Small ribosomal subunit protein bS20 (86 aa).

The disordered stretch occupies residues 1–26 (MANIKSAKKRALQSEKSRKHNASRRT).

It belongs to the bacterial ribosomal protein bS20 family.

Binds directly to 16S ribosomal RNA. The sequence is that of Small ribosomal subunit protein bS20 from Psychromonas ingrahamii (strain DSM 17664 / CCUG 51855 / 37).